The primary structure comprises 555 residues: NAD-dependent protein deacetylase sirtuin-1 (555 aa).

The short motif at 39-46 is the Nuclear localization signal element; sequence PPKRKKRK. The 261-residue stretch at 44-304 folds into the Deacetylase sirtuin-type domain; that stretch reads KRKDINTIED…NELCHRLGGE (261 aa). Lysine 46 is subject to N6-acetyllysine. Residues 64–67 form a required for interaction with the sumoylated form of CCAR2 region; it reads IIVL. NAD(+)-binding positions include 69–88 and 153–156; these read GAGVSVSCGIPDFRSRDGIY and QNID. The Proton acceptor role is filled by histidine 171. 2 residues coordinate Zn(2+): cysteine 179 and cysteine 182. An N6-acetyllysine modification is found at lysine 185. Zn(2+) contacts are provided by cysteine 203 and cysteine 206. Cysteine 203 and cysteine 206 each carry S-nitrosocysteine. An N6-acetyllysine modification is found at lysine 238. Residues 241–247 carry the Nuclear export signal motif; the sequence is VDLLIVI. Residues 248-250, 273-275, and cysteine 290 each bind NAD(+); these read GSS and NRE. Lysine 321 carries the post-translational modification N6-acetyllysine. The segment at 335 to 354 is disordered; that stretch reads LPPTPLHISEDSSSPERTVP. Residue threonine 338 is modified to Phosphothreonine. At serine 343 the chain carries Phosphoserine. Residues 345–354 are compositionally biased toward polar residues; sequence DSSSPERTVP. A Phosphothreonine modification is found at threonine 352. N6-acetyllysine is present on lysine 417. A phosphoserine mark is found at serine 466 and serine 468. Residues 469–529 are disordered; sequence EDDALSSSSC…GGSGADGGDQ (61 aa). Low complexity predominate over residues 473-493; sequence LSSSSCGSNSDSGTCQSPSLE. Residues 494–514 are compositionally biased toward acidic residues; the sequence is EPLEDESEIEEFYNGLEDDAD. Position 552 is a phosphoserine (serine 552).

Belongs to the sirtuin family. Class I subfamily. As to quaternary structure, interacts with XBP1 isoform 2. Found in a complex with PCAF and MYOD1. Interacts with FOXO1; the interaction deacetylates FOXO1, resulting in its nuclear retention and promotion of its transcriptional activity Component of the eNoSC complex, composed of SIRT1, SUV39H1 and RRP8. Interacts with HES1, HEY2 and PML. Interacts with RPS19BP1/AROS. Interacts with CCAR2 (via N-terminus); the interaction disrupts the interaction between SIRT1 and p53/TP53. Interacts with SETD7; the interaction induces the dissociation of SIRT1 from p53/TP53 and increases p53/TP53 activity. Interacts with MYCN, NR1I2, CREBZF, TSC2, TLE1, FOS, JUN, NR0B2, PPARG, NCOR, IRS1, IRS2 and NMNAT1. Interacts with HNF1A; the interaction occurs under nutrient restriction. Interacts with SUZ12; the interaction mediates the association with the PRC4 histone methylation complex which is specific as an association with PCR2 and PCR3 complex variants is not found. Interacts with HIV-1 tat. Interacts with BCL6; leads to a epigenetic repression of specific target genes. Interacts with CLOCK, BMAL1 and PER2. Interacts with PPARA; the interaction seems to be modulated by NAD(+) levels. Interacts with NR1H3 and this interaction is inhibited in the presence of CCAR2. Interacts with CHEK2. Interacts with p53/TP53. Exhibits a preferential interaction with sumoylated CCAR2 over its unmodified form. Interacts with PACS2. Interacts with SIRT7. Interacts with PUS7. Interacts with TULP3. Interacts with MORN3; the interaction enhances the ubiquitination of p53/TP53. The cofactor is Zn(2+). In terms of processing, methylated on multiple lysine residues; methylation is enhanced after DNA damage and is dispensable for deacetylase activity toward p53/TP53. Phosphorylated. Phosphorylated by STK4/MST1, resulting in inhibition of SIRT1-mediated p53/TP53 deacetylation. Phosphorylation by MAPK8/JNK1 at Thr-338 leads to increased nuclear localization and enzymatic activity. Phosphorylation at Thr-338 by DYRK1A and DYRK3 activates deacetylase activity and promotes cell survival. Phosphorylated by CaMK2, leading to increased p53/TP53 and NF-kappa-B p65/RELA deacetylation activity. Post-translationally, S-nitrosylated by GAPDH, leading to inhibit the NAD-dependent protein deacetylase activity. In terms of processing, acetylated at various Lys residues. Deacetylated via an autocatalytic mechanism. Autodeacetylation at Lys-46 promotes its protein deacetylase activity. Ubiquitinated; leading to degradation. Deubiquitinated by USP22; leading to stabilization.

It is found in the nucleus. It localises to the PML body. The protein resides in the cytoplasm. It carries out the reaction N(6)-acetyl-L-lysyl-[protein] + NAD(+) + H2O = 2''-O-acetyl-ADP-D-ribose + nicotinamide + L-lysyl-[protein]. The catalysed reaction is N(6)-propanoyl-L-lysyl-[protein] + NAD(+) + H2O = 3''-O-propanoyl-ADP-D-ribose + nicotinamide + L-lysyl-[protein]. It catalyses the reaction N(6)-(2E)-butenoyl-L-lysyl-[protein] + NAD(+) + H2O = 2''-O-(2E)-but-2-enoyl-ADP-D-ribose + nicotinamide + L-lysyl-[protein]. Its activity is regulated as follows. Inhibited by nicotinamide. Activated by resveratrol (3,5,4'-trihydroxy-trans-stilbene), butein (3,4,2',4'-tetrahydroxychalcone), piceatannol (3,5,3',4'-tetrahydroxy-trans-stilbene), Isoliquiritigenin (4,2',4'-trihydroxychalcone), fisetin (3,7,3',4'-tetrahydroxyflavone) and quercetin (3,5,7,3',4'-pentahydroxyflavone). MAPK8/JNK1 and RPS19BP1/AROS act as positive regulators of deacetylation activity. Negatively regulated by CCAR2. Its function is as follows. NAD-dependent protein deacetylase that links transcriptional regulation directly to intracellular energetics and participates in the coordination of several separated cellular functions such as cell cycle, response to DNA damage, metabolism, apoptosis and autophagy. Can modulate chromatin function through deacetylation of histones and can promote alterations in the methylation of histones and DNA, leading to transcriptional repression. Deacetylates a broad range of transcription factors and coregulators, thereby regulating target gene expression positively and negatively. Serves as a sensor of the cytosolic ratio of NAD(+)/NADH which is altered by glucose deprivation and metabolic changes associated with caloric restriction. Is essential in skeletal muscle cell differentiation and in response to low nutrients mediates the inhibitory effect on skeletal myoblast differentiation which also involves 5'-AMP-activated protein kinase (AMPK) and nicotinamide phosphoribosyltransferase (NAMPT). Component of the eNoSC (energy-dependent nucleolar silencing) complex, a complex that mediates silencing of rDNA in response to intracellular energy status and acts by recruiting histone-modifying enzymes. The eNoSC complex is able to sense the energy status of cell: upon glucose starvation, elevation of NAD(+)/NADP(+) ratio activates SIRT1, leading to histone H3 deacetylation followed by dimethylation of H3 at 'Lys-9' (H3K9me2) by SUV39H1 and the formation of silent chromatin in the rDNA locus. Deacetylates 'Lys-266' of SUV39H1, leading to its activation. Inhibits skeletal muscle differentiation by deacetylating PCAF and MYOD1. Deacetylates H2A and 'Lys-26' of H1-4. Deacetylates 'Lys-16' of histone H4 (in vitro). Involved in NR0B2/SHP corepression function through chromatin remodeling: Recruited to LRH1 target gene promoters by NR0B2/SHP thereby stimulating histone H3 and H4 deacetylation leading to transcriptional repression. Proposed to contribute to genomic integrity via positive regulation of telomere length; however, reports on localization to pericentromeric heterochromatin are conflicting. Proposed to play a role in constitutive heterochromatin (CH) formation and/or maintenance through regulation of the available pool of nuclear SUV39H1. Upon oxidative/metabolic stress decreases SUV39H1 degradation by inhibiting SUV39H1 polyubiquitination by MDM2. This increase in SUV39H1 levels enhances SUV39H1 turnover in CH, which in turn seems to accelerate renewal of the heterochromatin which correlates with greater genomic integrity during stress response. Deacetylates 'Lys-382' of p53/TP53 and impairs its ability to induce transcription-dependent proapoptotic program and modulate cell senescence. Deacetylates TAF1B and thereby represses rDNA transcription by the RNA polymerase I. Deacetylates MYC, promotes the association of MYC with MAX and decreases MYC stability leading to compromised transformational capability. Deacetylates FOXO3 in response to oxidative stress thereby increasing its ability to induce cell cycle arrest and resistance to oxidative stress but inhibiting FOXO3-mediated induction of apoptosis transcriptional activity; also leading to FOXO3 ubiquitination and protesomal degradation. Appears to have a similar effect on MLLT7/FOXO4 in regulation of transcriptional activity and apoptosis. Deacetylates DNMT1; thereby impairs DNMT1 methyltransferase-independent transcription repressor activity, modulates DNMT1 cell cycle regulatory function and DNMT1-mediated gene silencing. Deacetylates RELA/NF-kappa-B p65 thereby inhibiting its transactivating potential and augments apoptosis in response to TNF-alpha. Deacetylates HIF1A, KAT5/TIP60, RB1 and HIC1. Deacetylates FOXO1 resulting in its nuclear retention and enhancement of its transcriptional activity leading to increased gluconeogenesis in liver. Inhibits E2F1 transcriptional activity and apoptotic function, possibly by deacetylation. Involved in HES1- and HEY2-mediated transcriptional repression. In cooperation with MYCN seems to be involved in transcriptional repression of DUSP6/MAPK3 leading to MYCN stabilization by phosphorylation at 'Ser-62'. Deacetylates MEF2D. Required for antagonist-mediated transcription suppression of AR-dependent genes which may be linked to local deacetylation of histone H3. Represses HNF1A-mediated transcription. Required for the repression of ESRRG by CREBZF. Deacetylates NR1H3 AND NR1H2 and deacetylation of NR1H3 at 'Lys-434' positively regulates transcription of NR1H3:RXR target genes, promotes NR1H3 proteasomal degradation and results in cholesterol efflux; a promoter clearing mechanism after reach round of transcription is proposed. Involved in lipid metabolism: deacetylates LPIN1, thereby inhibiting diacylglycerol synthesis. Implicated in regulation of adipogenesis and fat mobilization in white adipocytes by repression of PPARG which probably involves association with NCOR1 and SMRT/NCOR2. Deacetylates p300/EP300 and PRMT1. Deacetylates ACSS2 leading to its activation, and HMGCS1 deacetylation. Involved in liver and muscle metabolism. Through deacetylation and activation of PPARGC1A is required to activate fatty acid oxidation in skeletal muscle under low-glucose conditions and is involved in glucose homeostasis. Involved in regulation of PPARA and fatty acid beta-oxidation in liver. Involved in positive regulation of insulin secretion in pancreatic beta cells in response to glucose; the function seems to imply transcriptional repression of UCP2. Proposed to deacetylate IRS2 thereby facilitating its insulin-induced tyrosine phosphorylation. Deacetylates SREBF1 isoform SREBP-1C thereby decreasing its stability and transactivation in lipogenic gene expression. Involved in DNA damage response by repressing genes which are involved in DNA repair, such as XPC and TP73, deacetylating XRCC6/Ku70, and facilitating recruitment of additional factors to sites of damaged DNA, such as SIRT1-deacetylated NBN can recruit ATM to initiate DNA repair and SIRT1-deacetylated XPA interacts with RPA2. Also involved in DNA repair of DNA double-strand breaks by homologous recombination and specifically single-strand annealing independently of XRCC6/Ku70 and NBN. Promotes DNA double-strand breaks by mediating deacetylation of SIRT6. Transcriptional suppression of XPC probably involves an E2F4:RBL2 suppressor complex and protein kinase B (AKT) signaling. Transcriptional suppression of TP73 probably involves E2F4 and PCAF. Deacetylates WRN thereby regulating its helicase and exonuclease activities and regulates WRN nuclear translocation in response to DNA damage. Deacetylates APEX1 at 'Lys-6' and 'Lys-7' and stimulates cellular AP endonuclease activity by promoting the association of APEX1 to XRCC1. Catalyzes deacetylation of ERCC4/XPF, thereby impairing interaction with ERCC1 and nucleotide excision repair (NER). Increases p53/TP53-mediated transcription-independent apoptosis by blocking nuclear translocation of cytoplasmic p53/TP53 and probably redirecting it to mitochondria. Deacetylates XRCC6/Ku70 at 'Lys-539' and 'Lys-542' causing it to sequester BAX away from mitochondria thereby inhibiting stress-induced apoptosis. Is involved in autophagy, presumably by deacetylating ATG5, ATG7 and MAP1LC3B/ATG8. Deacetylates AKT1 which leads to enhanced binding of AKT1 and PDK1 to PIP3 and promotes their activation. Proposed to play role in regulation of STK11/LBK1-dependent AMPK signaling pathways implicated in cellular senescence which seems to involve the regulation of the acetylation status of STK11/LBK1. Can deacetylate STK11/LBK1 and thereby increase its activity, cytoplasmic localization and association with STRAD; however, the relevance of such activity in normal cells is unclear. In endothelial cells is shown to inhibit STK11/LBK1 activity and to promote its degradation. Deacetylates SMAD7 at 'Lys-64' and 'Lys-70' thereby promoting its degradation. Deacetylates CIITA and augments its MHC class II transactivation and contributes to its stability. Deacetylates MECOM/EVI1. Deacetylates PML at 'Lys-487' and this deacetylation promotes PML control of PER2 nuclear localization. During the neurogenic transition, represses selective NOTCH1-target genes through histone deacetylation in a BCL6-dependent manner and leading to neuronal differentiation. Regulates the circadian expression of several core clock genes, including BMAL1, RORC, PER2 and CRY1 and plays a critical role in maintaining a controlled rhythmicity in histone acetylation, thereby contributing to circadian chromatin remodeling. Deacetylates BMAL1 and histones at the circadian gene promoters in order to facilitate repression by inhibitory components of the circadian oscillator. Deacetylates PER2, facilitating its ubiquitination and degradation by the proteasome. Protects cardiomyocytes against palmitate-induced apoptosis. Deacetylates XBP1 isoform 2; deacetylation decreases protein stability of XBP1 isoform 2 and inhibits its transcriptional activity. Deacetylates PCK1 and directs its activity toward phosphoenolpyruvate production promoting gluconeogenesis. Involved in the CCAR2-mediated regulation of PCK1 and NR1D1. Deacetylates CTNB1 at 'Lys-49'. In POMC (pro-opiomelanocortin) neurons, required for leptin-induced activation of PI3K signaling. In addition to protein deacetylase activity, also acts as a protein-lysine deacylase by mediating protein depropionylation and decrotonylation. Mediates depropionylation of Osterix (SP7). Catalyzes decrotonylation of histones; it however does not represent a major histone decrotonylase. Deacetylates SOX9; promoting SOX9 nuclear localization and transactivation activity. Involved in the regulation of centrosome duplication. Deacetylates CENATAC in G1 phase, allowing for SASS6 accumulation on the centrosome and subsequent procentriole assembly. Deacetylates NDC80/HEC1. In Rattus norvegicus (Rat), this protein is NAD-dependent protein deacetylase sirtuin-1.